The primary structure comprises 168 residues: Nicotinamide-nucleotide adenylyltransferase (168 aa).

The protein belongs to the archaeal NMN adenylyltransferase family.

The protein resides in the cytoplasm. The catalysed reaction is beta-nicotinamide D-ribonucleotide + ATP + H(+) = diphosphate + NAD(+). Its pathway is cofactor biosynthesis; NAD(+) biosynthesis; NAD(+) from nicotinamide D-ribonucleotide: step 1/1. This chain is Nicotinamide-nucleotide adenylyltransferase, found in Methanoculleus marisnigri (strain ATCC 35101 / DSM 1498 / JR1).